The sequence spans 79 residues: Ubiquinol-cytochrome c reductase complex assembly factor 5 (79 aa).

Residues 1 to 20 are Mitochondrial matrix-facing; that stretch reads MSPYSGSVRRLLDSWPGKKR. A helical transmembrane segment spans residues 21–43; sequence FGVYRFLPLFFLLGAGLEFSMIN. Residues 44–79 are Mitochondrial intermembrane-facing; the sequence is WTVGETNFYRTFKRRQAKNYVEEQQHLQARAANNTN.

Belongs to the UQCC5 family. In terms of assembly, interacts with respiratory complex III components Uqcc1 and RFeSP; the interactions are probably involved in the assembly and stability of the mitochondrial ubiquinol-cytochrome c reductase complex. Interacts with sloth2; the interaction stabilizes both components. Expressed in the brain.

Its subcellular location is the mitochondrion inner membrane. It localises to the mitochondrion. Its function is as follows. Required for the assembly and stability of the mitochondrial ubiquinol-cytochrome c reductase complex (complex III (CIII) or cytochrome b-c1 complex), a multisubunit transmembrane complex that is part of the mitochondrial electron transport chain (ETC) which drives oxidative phosphorylation. In Drosophila melanogaster (Fruit fly), this protein is Ubiquinol-cytochrome c reductase complex assembly factor 5.